The chain runs to 430 residues: Enolase (430 aa).

A (2R)-2-phosphoglycerate-binding site is contributed by glutamine 164. Glutamate 208 functions as the Proton donor in the catalytic mechanism. Mg(2+) contacts are provided by aspartate 245, glutamate 288, and aspartate 315. Residues lysine 340, arginine 369, serine 370, and lysine 391 each contribute to the (2R)-2-phosphoglycerate site. The Proton acceptor role is filled by lysine 340.

This sequence belongs to the enolase family. The cofactor is Mg(2+).

It is found in the cytoplasm. The protein localises to the secreted. Its subcellular location is the cell surface. It catalyses the reaction (2R)-2-phosphoglycerate = phosphoenolpyruvate + H2O. It functions in the pathway carbohydrate degradation; glycolysis; pyruvate from D-glyceraldehyde 3-phosphate: step 4/5. In terms of biological role, catalyzes the reversible conversion of 2-phosphoglycerate (2-PG) into phosphoenolpyruvate (PEP). It is essential for the degradation of carbohydrates via glycolysis. The polypeptide is Enolase (Thermococcus onnurineus (strain NA1)).